A 260-amino-acid chain; its full sequence is Small ribosomal subunit protein uS2 (260 aa).

Belongs to the universal ribosomal protein uS2 family.

The protein is Small ribosomal subunit protein uS2 of Roseobacter denitrificans (strain ATCC 33942 / OCh 114) (Erythrobacter sp. (strain OCh 114)).